The primary structure comprises 387 residues: Queuine tRNA-ribosyltransferase (387 aa).

Asp-102 functions as the Proton acceptor in the catalytic mechanism. Residues Asp-102–Phe-106, Asp-156, Gln-205, and Gly-232 contribute to the substrate site. Residues Gly-263–Asp-269 are RNA binding. Catalysis depends on Asp-282, which acts as the Nucleophile. The RNA binding; important for wobble base 34 recognition stretch occupies residues Thr-287–Arg-291. Cys-320, Cys-322, Cys-325, and His-351 together coordinate Zn(2+).

The protein belongs to the queuine tRNA-ribosyltransferase family. Homodimer. Within each dimer, one monomer is responsible for RNA recognition and catalysis, while the other monomer binds to the replacement base PreQ1. Zn(2+) serves as cofactor.

The enzyme catalyses 7-aminomethyl-7-carbaguanine + guanosine(34) in tRNA = 7-aminomethyl-7-carbaguanosine(34) in tRNA + guanine. It participates in tRNA modification; tRNA-queuosine biosynthesis. Its function is as follows. Catalyzes the base-exchange of a guanine (G) residue with the queuine precursor 7-aminomethyl-7-deazaguanine (PreQ1) at position 34 (anticodon wobble position) in tRNAs with GU(N) anticodons (tRNA-Asp, -Asn, -His and -Tyr). Catalysis occurs through a double-displacement mechanism. The nucleophile active site attacks the C1' of nucleotide 34 to detach the guanine base from the RNA, forming a covalent enzyme-RNA intermediate. The proton acceptor active site deprotonates the incoming PreQ1, allowing a nucleophilic attack on the C1' of the ribose to form the product. After dissociation, two additional enzymatic reactions on the tRNA convert PreQ1 to queuine (Q), resulting in the hypermodified nucleoside queuosine (7-(((4,5-cis-dihydroxy-2-cyclopenten-1-yl)amino)methyl)-7-deazaguanosine). The sequence is that of Queuine tRNA-ribosyltransferase from Polaromonas naphthalenivorans (strain CJ2).